Here is a 1003-residue protein sequence, read N- to C-terminus: UPF0182 protein Mkms_1433 (1003 aa).

Helical transmembrane passes span 18–38, 63–83, 114–134, 176–196, 211–231, 260–280, and 288–308; these read VLIGVALAAVVLLLIGPRFID, VVVFLVVSLLIGAIVFAGLAL, LFGFGVPAFIGILSGIVAQSY, FVATFLAFIANLLGHYLFGGI, IQLVTLVGILILLKAFAYWLD, KLILLAIAVICAVAVFSAIVL, and IGVVLLLLSSLVVGAGWPLVV. The span at 902 to 937 shows a compositional bias: low complexity; sequence ATGPAPANLPDGQPAAQPPNGQQPAAQTPGNQAGRA. The segment at 902-979 is disordered; the sequence is ATGPAPANLP…MSGLQDAQRS (78 aa).

Belongs to the UPF0182 family.

It is found in the cell membrane. The polypeptide is UPF0182 protein Mkms_1433 (Mycobacterium sp. (strain KMS)).